Here is a 160-residue protein sequence, read N- to C-terminus: Cyclic pyranopterin monophosphate synthase (160 aa).

Substrate contacts are provided by residues 74-76 (LSH) and 112-113 (ME). The active site involves Asp127.

Belongs to the MoaC family. Homohexamer; trimer of dimers.

The enzyme catalyses (8S)-3',8-cyclo-7,8-dihydroguanosine 5'-triphosphate = cyclic pyranopterin phosphate + diphosphate. It participates in cofactor biosynthesis; molybdopterin biosynthesis. In terms of biological role, catalyzes the conversion of (8S)-3',8-cyclo-7,8-dihydroguanosine 5'-triphosphate to cyclic pyranopterin monophosphate (cPMP). In Geotalea uraniireducens (strain Rf4) (Geobacter uraniireducens), this protein is Cyclic pyranopterin monophosphate synthase.